Here is a 205-residue protein sequence, read N- to C-terminus: Holliday junction branch migration complex subunit RuvA (205 aa).

The tract at residues 1–64 (MIGRLRGIIL…EDAQLLFGFN (64 aa)) is domain I. The tract at residues 65 to 142 (DKQERALFRE…KGLSGDLFNP (78 aa)) is domain II. The segment at 143-156 (VSDIPLASPASAES) is flexible linker. The domain III stretch occupies residues 157-205 (RASDPEAEAAAALVALGYKPQEASRMISKIARPEADCETLIRDALRAAL).

It belongs to the RuvA family. As to quaternary structure, homotetramer. Forms an RuvA(8)-RuvB(12)-Holliday junction (HJ) complex. HJ DNA is sandwiched between 2 RuvA tetramers; dsDNA enters through RuvA and exits via RuvB. An RuvB hexamer assembles on each DNA strand where it exits the tetramer. Each RuvB hexamer is contacted by two RuvA subunits (via domain III) on 2 adjacent RuvB subunits; this complex drives branch migration. In the full resolvosome a probable DNA-RuvA(4)-RuvB(12)-RuvC(2) complex forms which resolves the HJ.

The protein resides in the cytoplasm. Functionally, the RuvA-RuvB-RuvC complex processes Holliday junction (HJ) DNA during genetic recombination and DNA repair, while the RuvA-RuvB complex plays an important role in the rescue of blocked DNA replication forks via replication fork reversal (RFR). RuvA specifically binds to HJ cruciform DNA, conferring on it an open structure. The RuvB hexamer acts as an ATP-dependent pump, pulling dsDNA into and through the RuvAB complex. HJ branch migration allows RuvC to scan DNA until it finds its consensus sequence, where it cleaves and resolves the cruciform DNA. This is Holliday junction branch migration complex subunit RuvA from Pectobacterium carotovorum subsp. carotovorum (strain PC1).